The chain runs to 934 residues: MQRYELIRLIGKGGMGEVYLAHDKACSRRVALKRIREDLSGNALLRKRFLREAKIAADLIHPGIVPVYSICSDGEAVYYTMPYIEGFSLKSLLKSVWQKEVLSKELEEKTSVKSFLPIFDKICATVEYIHSKGVLHRDLKPDNILLGLFGEVVIVDWGAAIFKHAKELKLEQDDEAAVSFDERNICYSSMTIPGKIVGTPDYMAPESLLGVEASEKTDIYALGLILYQMLTLAFPYRRKKGRKLSYRDVVLPPIEMSPYREIPPSLSQIAMKAIAINPADRFSSIQELRQALQPYLQGDPEWTVKATLMAKEKSCWKYYDPILLSRYFPVLASSPAQWYNFMLSEVEISASTRVEYTVTKSAVHEGMGILFLPSKEAERGEFYCGYGLWFSVQNHELTVSLIKNGIEIQKKSQEMISQQYRFAILIEKSDNRIAVFVEQALFILHIDYLPSLGNRLGVIIQDLQGMSNIAISESIGALRVSCLAVPDAFLSEKLYDQAAIFYRKIRDSFPGRKESYEAQFRLGVTLLTQIEEQGGDLTQALSSFDYLHGGAGAPLEYLGKALVYQRNGSFVEEIRCLLFALKRYSQHPEIPRLEDHLCFRLYDSLHKHRSEALVFMLLILWIAPEKISVREEKRFLRIIYHKQQATLFCQVDKAPLQFRSSKMELFLSFWTGFSLFLPELFRRAGELRDYQALADIFYVAGVSGNREAFMQFSTALANVSDEITFPESLHNQKVAELMFFVKGVEALRNKDYQKAKKLLWKTPFTLQLYALDIFHIQAFLDEEIESFIDLLQAIYDPASEEERDHILVYIIQTHLWNRDLERAYKLLNDRFPLDEELAEYSEAFILWGCYLALTGDRVAVKAHFSRCRYKYGKSALIGKCVDGDIFDYLDNLVWWEKKMTLFQSYFLLRCLNESPRRYEKYRQAYLSMENNFFD.

A Protein kinase domain is found at 4 to 296 (YELIRLIGKG…ELRQALQPYL (293 aa)). ATP is bound by residues 10–18 (IGKGGMGEV) and lysine 33. The active-site Proton acceptor is aspartate 138.

It belongs to the protein kinase superfamily. Ser/Thr protein kinase family. As to quaternary structure, interacts with Pkn1. Post-translationally, autophosphorylated on serine and threonine residues. Present in elementary bodies 40 hours post-infection as 2 bands of approximately 55 to 60 and 45 to 50 kDa, which may be due to differential phosphorylation as well as degradation; an enzymatically active full-length protein can also be detected.

It carries out the reaction L-seryl-[protein] + ATP = O-phospho-L-seryl-[protein] + ADP + H(+). It catalyses the reaction L-threonyl-[protein] + ATP = O-phospho-L-threonyl-[protein] + ADP + H(+). In terms of biological role, together with the serine/threonine kinase Pkn1, may play a role in the specific interactions with host proteins during intracellular growth. Autophosphorylates and also phosphorylates Pkn1. This chain is Serine/threonine-protein kinase PknD, found in Chlamydia trachomatis serovar L2 (strain ATCC VR-902B / DSM 19102 / 434/Bu).